Here is a 174-residue protein sequence, read N- to C-terminus: Large ribosomal subunit protein uL10 (174 aa).

The protein belongs to the universal ribosomal protein uL10 family. As to quaternary structure, part of the ribosomal stalk of the 50S ribosomal subunit. The N-terminus interacts with L11 and the large rRNA to form the base of the stalk. The C-terminus forms an elongated spine to which L12 dimers bind in a sequential fashion forming a multimeric L10(L12)X complex.

Functionally, forms part of the ribosomal stalk, playing a central role in the interaction of the ribosome with GTP-bound translation factors. In Anaeromyxobacter sp. (strain Fw109-5), this protein is Large ribosomal subunit protein uL10.